The chain runs to 1528 residues: Intraflagellar transport protein 121 (1528 aa).

WD repeat units lie at residues 123–170 (SNRA…GSAP), 244–285 (SSMP…SSVS), 619–667 (PSLT…SEFL), and 759–798 (PELI…REDS). A disordered region spans residues 914–933 (DSGLDVTASNSSQPSTQTSQ). Residues 920–933 (TASNSSQPSTQTSQ) show a composition bias toward low complexity.

It localises to the cell projection. The protein resides in the cilium. Its subcellular location is the flagellum. It is found in the cytoplasm. The protein localises to the cytoskeleton. It localises to the flagellum axoneme. The protein resides in the flagellum basal body. Component of the intraflagellar transport complex A (IFT-A) involved in flagellar assembly. This is Intraflagellar transport protein 121 from Giardia intestinalis (strain ATCC 50803 / WB clone C6) (Giardia lamblia).